The following is a 502-amino-acid chain: Cytochrome P450 monooxygenase orf6 (502 aa).

A helical transmembrane segment spans residues 3–25 (ALWVLAVALVAYFLCLSIYRLFL). Residue N382 is glycosylated (N-linked (GlcNAc...) asparagine). C445 serves as a coordination point for heme.

This sequence belongs to the cytochrome P450 family. Heme serves as cofactor.

It is found in the membrane. It functions in the pathway mycotoxin biosynthesis. Functionally, cytochrome P450 monooxygenase; part of the gene cluster that mediates the biosynthesis of brefeldin A (BFA), a protein transport inhibitor that shows antiviral, antifungal, and antitumor properties. The proposed biosynthesis of BFA involves formation of an acyclic polyketide chain that is differentially tailored throughout the backbone. The highly reducing polyketide synthase Bref-PKS is proposed to synthesize the precisely reduced octaketide precursor, which could then be directly offloaded by the thiohydrolase enzyme Bref-TH followed by a cytochrome P450 monooxygenase-mediated formation of the cyclopentane ring and macrocyclization to afford 7-deoxy BFA. Alternatively, the first ring annulation can also occur on the ACP-tethered intermediate before the thiohydrolase release and lactonization. The C7-hydroxylation by another cytochrome P450 monooxygenase is believed to be the final step in the process to obtain the final structure of BFA. In addition to the HRPKS Bref-PKS and the thiohydrolase Bref-TH, the brefeldin A biosynthesis cluster contains 4 cytochrome p450 monooxygenases (called orf3 to orf6), as well a the probable cluster-specific transcription regulator orf8. In Eupenicillium brefeldianum (Penicillium brefeldianum), this protein is Cytochrome P450 monooxygenase orf6.